The primary structure comprises 185 residues: Elongation factor P (185 aa).

Belongs to the elongation factor P family.

It is found in the cytoplasm. It functions in the pathway protein biosynthesis; polypeptide chain elongation. Involved in peptide bond synthesis. Stimulates efficient translation and peptide-bond synthesis on native or reconstituted 70S ribosomes in vitro. Probably functions indirectly by altering the affinity of the ribosome for aminoacyl-tRNA, thus increasing their reactivity as acceptors for peptidyl transferase. The protein is Elongation factor P of Deinococcus radiodurans (strain ATCC 13939 / DSM 20539 / JCM 16871 / CCUG 27074 / LMG 4051 / NBRC 15346 / NCIMB 9279 / VKM B-1422 / R1).